Here is a 213-residue protein sequence, read N- to C-terminus: 3,4-dihydroxy-2-butanone 4-phosphate synthase (213 aa).

Residues 37 to 38 (RE), D42, 150 to 154 (RSGHT), and E174 each bind D-ribulose 5-phosphate. E38 contributes to the Mg(2+) binding site. H153 contributes to the Mg(2+) binding site.

The protein belongs to the DHBP synthase family. As to quaternary structure, homodimer. The cofactor is Mg(2+). Mn(2+) is required as a cofactor.

The enzyme catalyses D-ribulose 5-phosphate = (2S)-2-hydroxy-3-oxobutyl phosphate + formate + H(+). Its pathway is cofactor biosynthesis; riboflavin biosynthesis; 2-hydroxy-3-oxobutyl phosphate from D-ribulose 5-phosphate: step 1/1. In terms of biological role, catalyzes the conversion of D-ribulose 5-phosphate to formate and 3,4-dihydroxy-2-butanone 4-phosphate. The sequence is that of 3,4-dihydroxy-2-butanone 4-phosphate synthase from Blochmanniella floridana.